Here is a 333-residue protein sequence, read N- to C-terminus: Fatty acid hydroxylase domain-containing protein 2 (333 aa).

6 helical membrane-spanning segments follow: residues 29-49 (FILGSGLLSFVAFWNSVTWHL), 77-97 (ILFFIGAIQVPCLFFWSFNGL), 134-154 (TVLFNQCMVSFPMVVFLYPFL), 168-188 (FHWFLLELAIFTLIEEVLFYY), 215-235 (VISLYAHPIEHVVSNMLPAIV), and 237-257 (PLVMGSHLSSITMWFSLALII). The 124-residue stretch at 176-299 (AIFTLIEEVL…LGVLDHLHGT (124 aa)) folds into the Fatty acid hydroxylase domain.

Belongs to the sterol desaturase family.

Its subcellular location is the cytoplasm. It is found in the membrane. Functionally, promotes megakaryocyte differentiation by enhancing ERK phosphorylation and up-regulating RUNX1 expression. In Macaca fascicularis (Crab-eating macaque), this protein is Fatty acid hydroxylase domain-containing protein 2 (FAXDC2).